Here is a 250-residue protein sequence, read N- to C-terminus: Uridylate kinase (250 aa).

17–20 is a binding site for ATP; sequence KLSG. Glycine 59 contributes to the UMP binding site. Positions 60 and 64 each coordinate ATP. Residues aspartate 79 and 140 to 147 each bind UMP; that span reads TGNPYFTT. Threonine 167, tyrosine 173, and aspartate 176 together coordinate ATP.

The protein belongs to the UMP kinase family. In terms of assembly, homohexamer.

It is found in the cytoplasm. The enzyme catalyses UMP + ATP = UDP + ADP. The protein operates within pyrimidine metabolism; CTP biosynthesis via de novo pathway; UDP from UMP (UMPK route): step 1/1. With respect to regulation, inhibited by UTP. Functionally, catalyzes the reversible phosphorylation of UMP to UDP. This is Uridylate kinase from Myxococcus xanthus (strain DK1622).